Here is a 270-residue protein sequence, read N- to C-terminus: Formamidopyrimidine-DNA glycosylase (270 aa).

The active-site Schiff-base intermediate with DNA is Pro2. Glu3 functions as the Proton donor in the catalytic mechanism. Lys58 serves as the catalytic Proton donor; for beta-elimination activity. Residues His91, Arg110, and Arg151 each coordinate DNA. Residues 236–270 (FVYGRGGQPCKVCGTELREVKLGQRASVFCPKCQR) form an FPG-type zinc finger. Arg260 acts as the Proton donor; for delta-elimination activity in catalysis.

This sequence belongs to the FPG family. Monomer. Zn(2+) serves as cofactor.

It carries out the reaction Hydrolysis of DNA containing ring-opened 7-methylguanine residues, releasing 2,6-diamino-4-hydroxy-5-(N-methyl)formamidopyrimidine.. The catalysed reaction is 2'-deoxyribonucleotide-(2'-deoxyribose 5'-phosphate)-2'-deoxyribonucleotide-DNA = a 3'-end 2'-deoxyribonucleotide-(2,3-dehydro-2,3-deoxyribose 5'-phosphate)-DNA + a 5'-end 5'-phospho-2'-deoxyribonucleoside-DNA + H(+). In terms of biological role, involved in base excision repair of DNA damaged by oxidation or by mutagenic agents. Acts as a DNA glycosylase that recognizes and removes damaged bases. Has a preference for oxidized purines, such as 7,8-dihydro-8-oxoguanine (8-oxoG). Has AP (apurinic/apyrimidinic) lyase activity and introduces nicks in the DNA strand. Cleaves the DNA backbone by beta-delta elimination to generate a single-strand break at the site of the removed base with both 3'- and 5'-phosphates. The sequence is that of Formamidopyrimidine-DNA glycosylase from Pseudomonas entomophila (strain L48).